Consider the following 207-residue polypeptide: Serotonin N-acetyltransferase (207 aa).

Threonine 31 is subject to Phosphothreonine; by PKA. Residues 35 to 194 (SEFRCLTPQD…SLTFMELQCS (160 aa)) enclose the N-acetyltransferase domain. Residue leucine 124 participates in substrate binding. Acetyl-CoA is bound by residues 124 to 126 (LAV) and 132 to 137 (QQGKGS). Methionine 159 contributes to the substrate binding site. Position 168-170 (168-170 (YEK)) interacts with acetyl-CoA. The residue at position 205 (serine 205) is a Phosphoserine.

Belongs to the acetyltransferase family. AANAT subfamily. In terms of assembly, monomer. Interacts with several 14-3-3 proteins, including YWHAB, YWHAE, YWHAG and YWHAZ, preferentially when phosphorylated at Thr-31. Phosphorylation on Ser-205 also allows binding to YWHAZ, but with lower affinity. The interaction with YWHAZ considerably increases affinity for arylalkylamines and acetyl-CoA and protects the enzyme from dephosphorylation and proteasomal degradation. It may also prevent thiol-dependent inactivation. CAMP-dependent phosphorylation on both N-terminal Thr-31 and C-terminal Ser-205 regulates AANAT activity by promoting interaction with 14-3-3 proteins. Highly expressed in pineal gland and retina. Also detected in heart and intestine.

Its subcellular location is the cytoplasm. The enzyme catalyses a 2-arylethylamine + acetyl-CoA = an N-acetyl-2-arylethylamine + CoA + H(+). The protein operates within aromatic compound metabolism; melatonin biosynthesis; melatonin from serotonin: step 1/2. Functionally, controls the night/day rhythm of melatonin production in the pineal gland. Catalyzes the N-acetylation of serotonin into N-acetylserotonin, the penultimate step in the synthesis of melatonin. The protein is Serotonin N-acetyltransferase (AANAT) of Mesocricetus auratus (Golden hamster).